We begin with the raw amino-acid sequence, 29 residues long: Trypsin inhibitor 3 (29 aa).

3 disulfides stabilise this stretch: cysteine 3–cysteine 20, cysteine 10–cysteine 22, and cysteine 16–cysteine 28.

It belongs to the protease inhibitor I7 (squash-type serine protease inhibitor) family.

It localises to the secreted. Inhibits trypsin. This is Trypsin inhibitor 3 from Luffa aegyptiaca (Sponge gourd).